The primary structure comprises 152 residues: Ribosome maturation factor RimP (152 aa).

The protein belongs to the RimP family.

It localises to the cytoplasm. Functionally, required for maturation of 30S ribosomal subunits. This chain is Ribosome maturation factor RimP, found in Elusimicrobium minutum (strain Pei191).